We begin with the raw amino-acid sequence, 214 residues long: Transcription factor MYB24 (214 aa).

2 HTH myb-type domains span residues 14 to 66 and 67 to 121; these read DAEV…LNYL and RPDV…QKYI. 2 consecutive DNA-binding regions (H-T-H motif) follow at residues 42–66 and 94–117; these read WNSL…LNYL and WSKI…RTKI.

In terms of assembly, interacts (via N-terminus) with TIFY10A/JAZ1, TIFY5A/JAZ8 AND TIFY3A/JAZ11. In terms of tissue distribution, expressed specifically in flowers. Expressed in all four whorls of the flower and in the vascular tissue of stamen filament and sepals. Detected in male and female gametophytes, especially in microspores and ovules. Weakly expressed in petals and the upper part of pistils.

Its subcellular location is the nucleus. In terms of biological role, transcription factor acting redundantly with MYB21 and MYB57 to control stamen filament elongation in the late developed flowers. Contributes with MYB21 to induction of MYB108 by jasmonate. Repressed at the transcript levels by DELLA proteins. This is Transcription factor MYB24 (MYB24) from Arabidopsis thaliana (Mouse-ear cress).